The primary structure comprises 931 residues: Isoleucine--tRNA ligase (931 aa).

Positions 57–67 (PFANGNIHMGH) match the 'HIGH' region motif. Glutamate 556 contributes to the L-isoleucyl-5'-AMP binding site. Residues 597–601 (KMSKS) carry the 'KMSKS' region motif. Position 600 (lysine 600) interacts with ATP. Zn(2+) contacts are provided by cysteine 890, cysteine 893, cysteine 910, and cysteine 913.

It belongs to the class-I aminoacyl-tRNA synthetase family. IleS type 1 subfamily. As to quaternary structure, monomer. It depends on Zn(2+) as a cofactor.

The protein localises to the cytoplasm. It catalyses the reaction tRNA(Ile) + L-isoleucine + ATP = L-isoleucyl-tRNA(Ile) + AMP + diphosphate. Its function is as follows. Catalyzes the attachment of isoleucine to tRNA(Ile). As IleRS can inadvertently accommodate and process structurally similar amino acids such as valine, to avoid such errors it has two additional distinct tRNA(Ile)-dependent editing activities. One activity is designated as 'pretransfer' editing and involves the hydrolysis of activated Val-AMP. The other activity is designated 'posttransfer' editing and involves deacylation of mischarged Val-tRNA(Ile). The protein is Isoleucine--tRNA ligase of Lactobacillus delbrueckii subsp. bulgaricus (strain ATCC BAA-365 / Lb-18).